The sequence spans 371 residues: MAAEQRRSTIFDIVSKCIVQSVLRDISINSEYIESKAKQLCYCPASKKESVINGIYNCCESNIEIMDKEQLLKILDNLRCHSAHVCNATDFWRLYNSLKRFTHTTAFFNTCKPTILATLNTLITLILSNKLLYAAEMVEYLENQLDSSNKSMSQELAELLEMKYALINLVQYRILPMIIGEPIIVAGFSGKEPISDYSAEVERLMELPVKTDIVNTTYDFLARKGIDTSNNIAEYIAGLKIEEIEKVEKYLPEVISTIANSNIIKNKKSIFPANINDKQIMECSRMLDTSEKYSKGYKTDGAVTSPLTGNNTITTFIPISASDMQKFTILEYLYIMRVMANNVKKKNEGKNNGGVVMHINSPFKVINLPKC.

This sequence belongs to the chordopoxvirinae G7 family. In terms of assembly, part of a complex composed of A30, G7, F10 kinase, A15, D2, D3, and J1. Phosphorylated on serines by F10 kinase, phosphorylation state is regulated by H1 phosphatase. In terms of processing, undergoes proteolytic processing during morphogenesis, probably required for the transformation of immature virions (IV) into mature virions (MV).

The protein localises to the host cytoplasm. The protein resides in the virion. In terms of biological role, late protein which is a part of a large complex required for early virion morphogenesis. This complex participates in the formation of virosomes and the incorporation of virosomal contents into nascent immature virions. In Homo sapiens (Human), this protein is Assembly protein G7.